The sequence spans 398 residues: Probable beta-1,3-galactosyltransferase 5 (398 aa).

The helical; Signal-anchor for type II membrane protein transmembrane segment at 11-31 (LTMTWVPLLCISCFFLGAIFT) threads the bilayer. Residues N110, N115, and N206 are each glycosylated (N-linked (GlcNAc...) asparagine).

The protein belongs to the glycosyltransferase 31 family. The cofactor is Mn(2+).

It is found in the golgi apparatus membrane. The protein operates within protein modification; protein glycosylation. Beta-1,3-galactosyltransferase that transfers galactose from UDP-galactose to substrates with a terminal glycosyl residue. In Arabidopsis thaliana (Mouse-ear cress), this protein is Probable beta-1,3-galactosyltransferase 5 (B3GALT5).